The chain runs to 780 residues: Putative ABC transporter ATP-binding protein BL0043 (780 aa).

2 ABC transporter domains span residues 2-238 (LKDI…QSET) and 282-531 (IRVS…GPAH). 34–41 (GPNGSGKS) contacts ATP. Residues 230–272 (AEAVSQSETEGSIGTEAAPSRPTNDSPRQREREDGSELPLLSD) form a disordered region. 316 to 323 (GVNGSGKS) is an ATP binding site. A run of 4 helical transmembrane segments spans residues 551-573 (FTMF…LAVI), 586-608 (SIHP…VRTG), 623-645 (GVTI…AVFL), and 759-778 (IAAR…AAII).

It belongs to the ABC transporter superfamily.

Its subcellular location is the cell membrane. Functionally, probably part of an ABC transporter complex. Responsible for energy coupling to the transport system. This chain is Putative ABC transporter ATP-binding protein BL0043, found in Bifidobacterium longum (strain NCC 2705).